The chain runs to 461 residues: RNA-binding protein ZCH321 (461 aa).

C3H1-type zinc fingers lie at residues 63 to 85 (LCQL…HAAL) and 181 to 208 (ACDF…HICK). The interval 224-243 (TSQARDGGEPGPRGAKKGSV) is disordered. Positions 446-451 (WQHNPY) match the MKT1-binding motif motif.

Its function is as follows. RNA-binding protein involved in regulation of mRNA stability. Promotes mRNA stabilization by recruiting MKT1 and PBP1. Stabilizes transcripts encoding mitochondrial proteins. The polypeptide is RNA-binding protein ZCH321 (Trypanosoma brucei brucei (strain 927/4 GUTat10.1)).